The sequence spans 426 residues: Glucose-6-phosphate isomerase (426 aa).

Glu276 (proton donor) is an active-site residue. Catalysis depends on residues His297 and Lys413.

It belongs to the GPI family.

It is found in the cytoplasm. It catalyses the reaction alpha-D-glucose 6-phosphate = beta-D-fructose 6-phosphate. It participates in carbohydrate biosynthesis; gluconeogenesis. The protein operates within carbohydrate degradation; glycolysis; D-glyceraldehyde 3-phosphate and glycerone phosphate from D-glucose: step 2/4. In terms of biological role, catalyzes the reversible isomerization of glucose-6-phosphate to fructose-6-phosphate. The protein is Glucose-6-phosphate isomerase of Mesoplasma florum (strain ATCC 33453 / NBRC 100688 / NCTC 11704 / L1) (Acholeplasma florum).